A 472-amino-acid polypeptide reads, in one-letter code: Calcitonin gene-related peptide type 1 receptor (472 aa).

The first 28 residues, 1–28 (MGLLLRSALFKYIIIVLIMLNLRGYVLA), serve as a signal peptide directing secretion. Residues 29–149 (EQEQGSQIPL…FTHEKVKTAL (121 aa)) lie on the Extracellular side of the membrane. Intrachain disulfides connect Cys-58/Cys-84, Cys-75/Cys-115, and Cys-98/Cys-137. Asn-76, Asn-128, and Asn-133 each carry an N-linked (GlcNAc...) asparagine glycan. A helical membrane pass occupies residues 150–174 (NLYYLTIIGHGLSIASLLISLGIFF). At 175-185 (YFKNLSCQRIT) the chain is on the cytoplasmic side. The helical transmembrane segment at 186–208 (LHKNLFFSFVCNSIITIISLSAV) threads the bilayer. The Extracellular segment spans residues 209-219 (ANNQALVATNP). A helical transmembrane segment spans residues 220–248 (VSCKISQFIHLYLMGCNYFWMLCEGIYLH). Over 249-262 (TLIVVAVFAEKQHL) the chain is Cytoplasmic. Residues 263 to 283 (MWYYLLGWGFPLIPACIHAVA) form a helical membrane-spanning segment. Residues 284–299 (RSLYYNDNCWISSETH) lie on the Extracellular side of the membrane. Residues 300–324 (LLYIIHGPICAALLVNLFFLLNIVR) form a helical membrane-spanning segment. Residues 325-339 (VLITKLKVTHQAESN) lie on the Cytoplasmic side of the membrane. Residues 340 to 361 (LYMKAVRATLILVPLLGIEFVL) traverse the membrane as a helical segment. Residues 362-376 (FPWKPEGRIAEEIYD) are Extracellular-facing. Residues 377 to 397 (YVMHILMHYQGLLVATIFCFF) traverse the membrane as a helical segment. The Cytoplasmic segment spans residues 398 to 472 (NGEVQAVLKR…VFFKTEKQYM (75 aa)).

This sequence belongs to the G-protein coupled receptor 2 family.

The protein localises to the cell membrane. In terms of biological role, may function as G protein-coupled receptor for calcitonin-gene-related peptides and adrenomedullin. Specificity may be modulated by accessory proteins. May activate cAMP-dependent pathway. This is Calcitonin gene-related peptide type 1 receptor (calcrl) from Xenopus tropicalis (Western clawed frog).